Consider the following 100-residue polypeptide: NADH-quinone oxidoreductase subunit K (100 aa).

3 helical membrane-spanning segments follow: residues 4-24 (LSNY…GVLT), 29-49 (IVVF…FVAF), and 60-80 (IFVF…LALF).

Belongs to the complex I subunit 4L family. As to quaternary structure, NDH-1 is composed of 14 different subunits. Subunits NuoA, H, J, K, L, M, N constitute the membrane sector of the complex.

Its subcellular location is the cell inner membrane. It catalyses the reaction a quinone + NADH + 5 H(+)(in) = a quinol + NAD(+) + 4 H(+)(out). Its function is as follows. NDH-1 shuttles electrons from NADH, via FMN and iron-sulfur (Fe-S) centers, to quinones in the respiratory chain. The immediate electron acceptor for the enzyme in this species is believed to be ubiquinone. Couples the redox reaction to proton translocation (for every two electrons transferred, four hydrogen ions are translocated across the cytoplasmic membrane), and thus conserves the redox energy in a proton gradient. The sequence is that of NADH-quinone oxidoreductase subunit K from Trichlorobacter lovleyi (strain ATCC BAA-1151 / DSM 17278 / SZ) (Geobacter lovleyi).